The sequence spans 197 residues: Class A basic helix-loop-helix protein 15 (197 aa).

Basic residues predominate over residues 1–12; that stretch reads MKTKNRPPRRRT. 2 disordered regions span residues 1–82 and 178–197; these read MKTK…ERER and QPQG…REGS. 2 positions are modified to phosphothreonine: Thr12 and Thr25. Positions 65-82 are enriched in basic and acidic residues; sequence GRRENSVQRRLESNERER. The bHLH domain occupies 72–124; sequence QRRLESNERERQRMHKLNNAFQALREVIPHVRADKKLSKIETLTLAKNYIKSL.

As to quaternary structure, forms homodimers or heterodimers with TCF3 gene products E12 and E47. These dimers bind to the E-box site, however, heterodimer with MYOD1 does not bind target DNA. Expressed in pancreatic tissue only in acinar cells. There is a complete absence of expression in intra- or interlobular pancreatic ducts and in all islet cells.

It is found in the nucleus. Its function is as follows. Plays a role in controlling the transcriptional activity of MyoD, ensuring that expanding myoblast populations remain undifferentiated. Repression may occur through muscle-specific E-box occupancy by homodimers. May also negatively regulate bHLH-mediated transcription through an N-terminal repressor domain. Serves as a key regulator of acinar cell function, stability, and identity. Also required for normal organelle localization in exocrine cells and for mitochondrial calcium ion transport. May function as a unique regulator of gene expression in several different embryonic and postnatal cell lineages. Binds to the E-box consensus sequence 5'-CANNTG-3'. In Mus musculus (Mouse), this protein is Class A basic helix-loop-helix protein 15 (Bhlha15).